A 184-amino-acid polypeptide reads, in one-letter code: NEDD8-conjugating enzyme Ubc12 (184 aa).

A UBC core domain is found at A30 to V175. Residue C113 is the Glycyl thioester intermediate of the active site.

The protein belongs to the ubiquitin-conjugating enzyme family. UBC12 subfamily. Interacts with RBX1. In terms of tissue distribution, expressed in shoot, root and floral meristems, and in vascular tissues of leaves.

Its pathway is protein modification; protein neddylation. Its function is as follows. Accepts the ubiquitin-like protein NEDD8/RUB1 from the ECR1-AXR1 E1 complex and catalyzes its covalent attachment to other proteins. This is NEDD8-conjugating enzyme Ubc12 (RCE1) from Arabidopsis thaliana (Mouse-ear cress).